The chain runs to 197 residues: Probable GTP-binding protein EngB (197 aa).

The EngB-type G domain occupies 24 to 197; it reads DIPEIALAGR…WDAILEKVNK (174 aa). GTP-binding positions include 32-39, 59-63, 77-80, 144-147, and 176-178; these read GRSNVGKS, GKTQL, DVPG, TKAD, and FSS. Residues serine 39 and threonine 61 each coordinate Mg(2+).

It belongs to the TRAFAC class TrmE-Era-EngA-EngB-Septin-like GTPase superfamily. EngB GTPase family. Requires Mg(2+) as cofactor.

Functionally, necessary for normal cell division and for the maintenance of normal septation. The protein is Probable GTP-binding protein EngB of Streptococcus gordonii (strain Challis / ATCC 35105 / BCRC 15272 / CH1 / DL1 / V288).